The primary structure comprises 291 residues: tRNA U34 carboxymethyltransferase (291 aa).

Carboxy-S-adenosyl-L-methionine contacts are provided by residues Lys-61, Trp-75, Lys-80, Gly-100, 122-124 (DPS), 149-150 (VE), Tyr-169, and Arg-284.

It belongs to the class I-like SAM-binding methyltransferase superfamily. CmoB family. As to quaternary structure, homotetramer.

It carries out the reaction carboxy-S-adenosyl-L-methionine + 5-hydroxyuridine(34) in tRNA = 5-carboxymethoxyuridine(34) in tRNA + S-adenosyl-L-homocysteine + H(+). Functionally, catalyzes carboxymethyl transfer from carboxy-S-adenosyl-L-methionine (Cx-SAM) to 5-hydroxyuridine (ho5U) to form 5-carboxymethoxyuridine (cmo5U) at position 34 in tRNAs. The polypeptide is tRNA U34 carboxymethyltransferase (Campylobacter jejuni subsp. jejuni serotype O:6 (strain 81116 / NCTC 11828)).